Consider the following 480-residue polypeptide: Protein nucleotidyltransferase YdiU (480 aa).

8 residues coordinate ATP: glycine 86, glycine 88, arginine 89, lysine 109, aspartate 121, glycine 122, arginine 172, and arginine 179. The active-site Proton acceptor is the aspartate 248. Residues asparagine 249 and aspartate 258 each contribute to the Mg(2+) site. Aspartate 258 contributes to the ATP binding site.

Belongs to the SELO family. It depends on Mg(2+) as a cofactor. Requires Mn(2+) as cofactor.

The catalysed reaction is L-seryl-[protein] + ATP = 3-O-(5'-adenylyl)-L-seryl-[protein] + diphosphate. The enzyme catalyses L-threonyl-[protein] + ATP = 3-O-(5'-adenylyl)-L-threonyl-[protein] + diphosphate. It carries out the reaction L-tyrosyl-[protein] + ATP = O-(5'-adenylyl)-L-tyrosyl-[protein] + diphosphate. It catalyses the reaction L-histidyl-[protein] + UTP = N(tele)-(5'-uridylyl)-L-histidyl-[protein] + diphosphate. The catalysed reaction is L-seryl-[protein] + UTP = O-(5'-uridylyl)-L-seryl-[protein] + diphosphate. The enzyme catalyses L-tyrosyl-[protein] + UTP = O-(5'-uridylyl)-L-tyrosyl-[protein] + diphosphate. Its function is as follows. Nucleotidyltransferase involved in the post-translational modification of proteins. It can catalyze the addition of adenosine monophosphate (AMP) or uridine monophosphate (UMP) to a protein, resulting in modifications known as AMPylation and UMPylation. This is Protein nucleotidyltransferase YdiU from Klebsiella pneumoniae (strain 342).